The chain runs to 425 residues: Dual-specificity RNA methyltransferase RlmN (425 aa).

Glu-136 serves as the catalytic Proton acceptor. The 248-residue stretch at 142–389 (GDDRGTLCVS…VRTPRGRDIL (248 aa)) folds into the Radical SAM core domain. Cysteines 149 and 392 form a disulfide. 3 residues coordinate [4Fe-4S] cluster: Cys-156, Cys-160, and Cys-163. Residues 218–219 (GE), Ser-250, 272–274 (SLH), and Asn-349 each bind S-adenosyl-L-methionine. Cys-392 (S-methylcysteine intermediate) is an active-site residue.

This sequence belongs to the radical SAM superfamily. RlmN family. It depends on [4Fe-4S] cluster as a cofactor.

The protein localises to the cytoplasm. The catalysed reaction is adenosine(2503) in 23S rRNA + 2 reduced [2Fe-2S]-[ferredoxin] + 2 S-adenosyl-L-methionine = 2-methyladenosine(2503) in 23S rRNA + 5'-deoxyadenosine + L-methionine + 2 oxidized [2Fe-2S]-[ferredoxin] + S-adenosyl-L-homocysteine. It carries out the reaction adenosine(37) in tRNA + 2 reduced [2Fe-2S]-[ferredoxin] + 2 S-adenosyl-L-methionine = 2-methyladenosine(37) in tRNA + 5'-deoxyadenosine + L-methionine + 2 oxidized [2Fe-2S]-[ferredoxin] + S-adenosyl-L-homocysteine. Its function is as follows. Specifically methylates position 2 of adenine 2503 in 23S rRNA and position 2 of adenine 37 in tRNAs. m2A2503 modification seems to play a crucial role in the proofreading step occurring at the peptidyl transferase center and thus would serve to optimize ribosomal fidelity. The sequence is that of Dual-specificity RNA methyltransferase RlmN from Methylorubrum populi (strain ATCC BAA-705 / NCIMB 13946 / BJ001) (Methylobacterium populi).